The primary structure comprises 281 residues: 18S rRNA (guanine-N(7))-methyltransferase (281 aa).

The tract at residues 256–281 is disordered; the sequence is KARRRRQGKEVCPDTQYTGRKRKPRF.

The protein belongs to the class I-like SAM-binding methyltransferase superfamily. BUD23/WBSCR22 family. In terms of assembly, heterodimer with TRMT112; this heterodimerization is necessary for the metabolic stability and activity of the catalytic subunit BUD23. Interacts with GRIP1. In terms of processing, may be ubiquitinated and targeted to degradation in response to pro-inflammatory cytokine signaling.

Its subcellular location is the nucleus. It localises to the nucleoplasm. The protein resides in the cytoplasm. It is found in the perinuclear region. The catalysed reaction is a guanosine in 18S rRNA + S-adenosyl-L-methionine = an N(7)-methylguanosine in 18S rRNA + S-adenosyl-L-homocysteine. In terms of biological role, S-adenosyl-L-methionine-dependent methyltransferase that specifically methylates the N(7) position of a guanine in 18S rRNA. Requires the methyltransferase adapter protein TRM112 for full rRNA methyltransferase activity. Involved in the pre-rRNA processing steps leading to small-subunit rRNA production independently of its RNA-modifying catalytic activity. Important for biogenesis end export of the 40S ribosomal subunit independent on its methyltransferase activity. Locus-specific steroid receptor coactivator. Potentiates transactivation by glucocorticoid (NR3C1), mineralocorticoid (NR3C2), androgen (AR) and progesterone (PGR) receptors. Required for the maintenance of open chromatin at the TSC22D3/GILZ locus to facilitate NR3C1 loading on the response elements. Required for maintenance of dimethylation on histone H3 'Lys-79' (H3K79me2), although direct histone methyltransferase activity is not observed in vitro. The polypeptide is 18S rRNA (guanine-N(7))-methyltransferase (Bos taurus (Bovine)).